A 570-amino-acid chain; its full sequence is 5-aminolevulinate synthase, mitochondrial (570 aa).

Residues 1–53 (MESVIRSSAKICPFMHSATGSMQSVKALKNANLPAIAQQCPFMGKAMEQRRGY) constitute a mitochondrion transit peptide. Residues arginine 119, serine 232, and lysine 251 each coordinate substrate. Serine 284, histidine 312, and threonine 356 together coordinate pyridoxal 5'-phosphate. Lysine 359 is an active-site residue. An N6-(pyridoxal phosphate)lysine modification is found at lysine 359. The pyridoxal 5'-phosphate site is built by threonine 388 and threonine 389. Threonine 474 is a binding site for substrate.

Belongs to the class-II pyridoxal-phosphate-dependent aminotransferase family. In terms of assembly, homodimer. Pyridoxal 5'-phosphate serves as cofactor.

The protein resides in the mitochondrion matrix. It carries out the reaction succinyl-CoA + glycine + H(+) = 5-aminolevulinate + CO2 + CoA. It functions in the pathway porphyrin-containing compound metabolism; protoporphyrin-IX biosynthesis; 5-aminolevulinate from glycine: step 1/1. Functionally, catalyzes the synthesis of 5-aminolevulinate (ALA) from succinyl-CoA and glycine, the first and rate-limiting step in heme biosynthesis. This Kluyveromyces lactis (strain ATCC 8585 / CBS 2359 / DSM 70799 / NBRC 1267 / NRRL Y-1140 / WM37) (Yeast) protein is 5-aminolevulinate synthase, mitochondrial (HEM1).